The following is a 267-amino-acid chain: Mlc titration factor A (267 aa).

Zn(2+)-binding residues include His-111, His-148, His-152, and Glu-211.

Belongs to the MtfA family. As to quaternary structure, interacts with Mlc. The cofactor is Zn(2+).

The protein resides in the cytoplasm. Involved in the modulation of the activity of the glucose-phosphotransferase system (glucose-PTS). Interacts with the transcriptional repressor Mlc, preventing its interaction with DNA and leading to the modulation of expression of genes regulated by Mlc, including ptsG, which encodes the PTS system glucose-specific EIICB component. Its function is as follows. Shows zinc-dependent metallopeptidase activity. This Yersinia enterocolitica serotype O:8 / biotype 1B (strain NCTC 13174 / 8081) protein is Mlc titration factor A.